The sequence spans 209 residues: ATP phosphoribosyltransferase (209 aa).

It belongs to the ATP phosphoribosyltransferase family. Short subfamily. As to quaternary structure, heteromultimer composed of HisG and HisZ subunits.

Its subcellular location is the cytoplasm. It carries out the reaction 1-(5-phospho-beta-D-ribosyl)-ATP + diphosphate = 5-phospho-alpha-D-ribose 1-diphosphate + ATP. It functions in the pathway amino-acid biosynthesis; L-histidine biosynthesis; L-histidine from 5-phospho-alpha-D-ribose 1-diphosphate: step 1/9. In terms of biological role, catalyzes the condensation of ATP and 5-phosphoribose 1-diphosphate to form N'-(5'-phosphoribosyl)-ATP (PR-ATP). Has a crucial role in the pathway because the rate of histidine biosynthesis seems to be controlled primarily by regulation of HisG enzymatic activity. The chain is ATP phosphoribosyltransferase from Sulfurimonas denitrificans (strain ATCC 33889 / DSM 1251) (Thiomicrospira denitrificans (strain ATCC 33889 / DSM 1251)).